The following is a 224-amino-acid chain: tRNA (guanine-N(7)-)-methyltransferase (224 aa).

S-adenosyl-L-methionine is bound by residues Glu-54, Glu-79, Glu-106, and Asp-129. Asp-129 is an active-site residue. Lys-133 and Asp-165 together coordinate substrate.

It belongs to the class I-like SAM-binding methyltransferase superfamily. TrmB family.

It carries out the reaction guanosine(46) in tRNA + S-adenosyl-L-methionine = N(7)-methylguanosine(46) in tRNA + S-adenosyl-L-homocysteine. It functions in the pathway tRNA modification; N(7)-methylguanine-tRNA biosynthesis. Functionally, catalyzes the formation of N(7)-methylguanine at position 46 (m7G46) in tRNA. The protein is tRNA (guanine-N(7)-)-methyltransferase of Chlamydia abortus (strain DSM 27085 / S26/3) (Chlamydophila abortus).